The following is a 156-amino-acid chain: ATP synthase subunit b (156 aa).

The chain crosses the membrane as a helical span at residues 7–27 (LIGQTVAFIIFVWFCMKFVWP).

Belongs to the ATPase B chain family. In terms of assembly, F-type ATPases have 2 components, F(1) - the catalytic core - and F(0) - the membrane proton channel. F(1) has five subunits: alpha(3), beta(3), gamma(1), delta(1), epsilon(1). F(0) has three main subunits: a(1), b(2) and c(10-14). The alpha and beta chains form an alternating ring which encloses part of the gamma chain. F(1) is attached to F(0) by a central stalk formed by the gamma and epsilon chains, while a peripheral stalk is formed by the delta and b chains.

It localises to the cell inner membrane. F(1)F(0) ATP synthase produces ATP from ADP in the presence of a proton or sodium gradient. F-type ATPases consist of two structural domains, F(1) containing the extramembraneous catalytic core and F(0) containing the membrane proton channel, linked together by a central stalk and a peripheral stalk. During catalysis, ATP synthesis in the catalytic domain of F(1) is coupled via a rotary mechanism of the central stalk subunits to proton translocation. In terms of biological role, component of the F(0) channel, it forms part of the peripheral stalk, linking F(1) to F(0). In Shewanella sp. (strain ANA-3), this protein is ATP synthase subunit b.